Reading from the N-terminus, the 482-residue chain is Cobyric acid synthase (482 aa).

The 188-residue stretch at 249–436 (QCKIACLALS…LHGLFTSDDF (188 aa)) folds into the GATase cobBQ-type domain. Cys-331 serves as the catalytic Nucleophile. His-428 is an active-site residue.

It belongs to the CobB/CobQ family. CobQ subfamily.

It participates in cofactor biosynthesis; adenosylcobalamin biosynthesis. Catalyzes amidations at positions B, D, E, and G on adenosylcobyrinic A,C-diamide. NH(2) groups are provided by glutamine, and one molecule of ATP is hydrogenolyzed for each amidation. This is Cobyric acid synthase from Bradyrhizobium diazoefficiens (strain JCM 10833 / BCRC 13528 / IAM 13628 / NBRC 14792 / USDA 110).